The primary structure comprises 449 residues: Protein tweety homolog 1-A (449 aa).

The Extracellular segment spans residues Met-1 to Ala-43. A helical transmembrane segment spans residues Leu-44–Val-64. The Cytoplasmic segment spans residues Tyr-65–Cys-86. Residues Cys-87–Phe-107 traverse the membrane as a helical segment. The Extracellular segment spans residues Tyr-108–Trp-212. Residue Asn-128 is glycosylated (N-linked (GlcNAc...) asparagine). The helical transmembrane segment at Leu-213 to Leu-233 threads the bilayer. The Cytoplasmic portion of the chain corresponds to Ala-234–Lys-238. The chain crosses the membrane as a helical span at residues Trp-239–Met-259. The Extracellular portion of the chain corresponds to Gly-260–Glu-388. 2 cysteine pairs are disulfide-bonded: Cys-273-Cys-383 and Cys-301-Cys-368. Residues Asn-282 and Asn-353 are each glycosylated (N-linked (GlcNAc...) asparagine). The chain crosses the membrane as a helical span at residues Gly-389–Cys-409. Residues Ser-410–Ile-449 lie on the Cytoplasmic side of the membrane.

It belongs to the tweety family. Homotetramer; disulfide-linked. Homodimer.

The protein localises to the cell membrane. The enzyme catalyses chloride(in) = chloride(out). The catalysed reaction is L-glutamate(out) = L-glutamate(in). In terms of biological role, may act as a calcium-independent, swelling-dependent volume-regulated anion channel (VRAC-swell) which plays a pivotal role in the process of regulatory volume decrease (RVD) in the brain through the efflux of anions like chloride and organic osmolytes like glutamate. In Xenopus laevis (African clawed frog), this protein is Protein tweety homolog 1-A (ttyh1-a).